Consider the following 362-residue polypeptide: tRNA N6-adenosine threonylcarbamoyltransferase (362 aa).

Fe cation contacts are provided by histidine 116 and histidine 120. Substrate is bound by residues 138 to 142 (LVSGG), aspartate 171, glycine 184, and asparagine 284. Aspartate 312 provides a ligand contact to Fe cation.

Belongs to the KAE1 / TsaD family. Requires Fe(2+) as cofactor.

Its subcellular location is the cytoplasm. The enzyme catalyses L-threonylcarbamoyladenylate + adenosine(37) in tRNA = N(6)-L-threonylcarbamoyladenosine(37) in tRNA + AMP + H(+). Functionally, required for the formation of a threonylcarbamoyl group on adenosine at position 37 (t(6)A37) in tRNAs that read codons beginning with adenine. Is involved in the transfer of the threonylcarbamoyl moiety of threonylcarbamoyl-AMP (TC-AMP) to the N6 group of A37, together with TsaE and TsaB. TsaD likely plays a direct catalytic role in this reaction. The sequence is that of tRNA N6-adenosine threonylcarbamoyltransferase from Chelativorans sp. (strain BNC1).